The chain runs to 233 residues: Gamma-glutamyl-hercynylcysteine sulfoxide hydrolase (233 aa).

The active-site Nucleophile is C2. Residues 2–233 form the Glutamine amidotransferase type-2 domain; the sequence is CRHLGWLGAQ…TALDRAKGPR (232 aa).

It catalyses the reaction gamma-L-glutamyl-hercynylcysteine S-oxide + H2O = S-(hercyn-2-yl)-L-cysteine S-oxide + L-glutamate. Its pathway is amino-acid biosynthesis; ergothioneine biosynthesis. Catalyzes the hydrolysis of the gamma-glutamyl amide bond of hercynyl-gamma-L-glutamyl-L-cysteine sulfoxide to produce hercynylcysteine sulfoxide, a step in the biosynthesis pathway of ergothioneine. Ergothioneine is an antioxidant that protects mycobacteria from oxidative stress. This chain is Gamma-glutamyl-hercynylcysteine sulfoxide hydrolase (egtC), found in Mycobacterium tuberculosis (strain ATCC 25618 / H37Rv).